Consider the following 885-residue polypeptide: MQERYQPNLVEAAAQQDWQARDAYLVHESAKNADGSEKPKFYACSMLPYPSGKLHMGHVRNYTINDMMARQLRMRGYNVLMPMGWDAFGMPAENAAIKSKVPPAKWTYDNIAYMKKQMKAMGLAIDWSREMCACDPAYYKWNQWLFLKMLEKGIAYRKTQVVNWDPVDQTVLANEQVIDGRGWRSGAPVEKREIPGYYLRITDYADELLDQVKNGLPGWPERVRVMQENWIGKSEGVRLAFPHDIKDENGQLIQDGKLFVFTTRADTVMGVTFCAVAPEHPLATLAARNNPALATFIEQCKLGGTTEAEIATREKEGIPTGLSVKHPLTGQAVDLWVGNYVLMSYGDGAVMGVPAHDERDFAFARKYGLTIRQVIAQEGKTYSDQAWQEWYGDKQTGRTINSGKYDGLSTAEAVDAIAADLNALGLGEKQTTYRLRDWGISRQRYWGTPIPIIHCQDCGPVPVPEQDLPVVLPDDLIPDGSGNPLAKNEAFLSCSCPACGKPARRETDTMDTFVDSSWYFMRYTSPGNDQAMVDKRNDYWMPMDQYIGGIEHAVLHLLYARFWTKVMRDLGMLKFDEPFTRLLCQGMVLNHIYSRRTPQGGIEYFWPEEVENIYDAKGAIVGARLKSDGSEITYGGVGTMSKSKNNGVDPQSLIDTLGADTARLFVMFASPPEQTLEWSDSGVDGANRFLRRLWALAYDRRAAVARGLASGYAWQDAPAPVKDLRRELYGLLKQAEYDYQRIQYNTVVSASMKMLNAIDNAQLPEGPAADAAIAEGLGLLLRVLYPVVPHVTWHIWRDLGYAAELGDLLDAPWPHVDEAALIADEIELMLQVNGKLRGAIRVAAQAAKEDIEKIAVAQEEVARFLEGRPPKRVIVVPGKLVNVVG.

The short motif at 48–58 is the 'HIGH' region element; it reads PYPSGKLHMGH. Positions 639-643 match the 'KMSKS' region motif; the sequence is TMSKS. Lys-642 lines the ATP pocket.

This sequence belongs to the class-I aminoacyl-tRNA synthetase family.

It is found in the cytoplasm. It carries out the reaction tRNA(Leu) + L-leucine + ATP = L-leucyl-tRNA(Leu) + AMP + diphosphate. The protein is Leucine--tRNA ligase of Bordetella avium (strain 197N).